A 404-amino-acid polypeptide reads, in one-letter code: MLIPCWDSAGQIHHLEGFPTSFKDWSRGEELSAQRREFLSAVEKVTPSSISSTRDLAVDMNLTLEVTLDDGQVLVVRQCYPSQNDDVEELWRTSKFESEVNLMQWLEQNSRIPVPSIHSVMRRGTDSPAHFIIMSKLPGQVLMNSHSLLSSLAKVFALSHLTVRNTVLELFRLDVPQRIGTTIPSNPGDGLDVRPKIGKQYSLSADRVFDTLEEYMRHLFSLKRKSKSIGDGDTDKARAYSTLTTLEDLVNVHLKSLTSPSLRRCVLMHDDLHDANILVDIHGNITGVLDWEFHSIQPAVLAVGYPAWLSYDDTNDPRFASSSVWWVVGRQESIELRRQYAMIVKVKDLEYYEALVAGLFLRSVVNWLIDEHADPGCLRLRGWMISEEALGESLTQPDQIVPAK.

Functionally, part of the gene cluster that mediates the biosynthesis of clavilactone A, a meroterpenoid that features a unique benzo-fused ten-membered carbocyclic ring unit with an alpha,beta-epoxy-gamma-lactone moiety, forming an intriguing 10/5/3 tricyclic nested skeleton. ClaR, ClaS and ClaT are sufficient to produce clavilactone A and the function of claY, if any, has still to be identified. The biosynthesis begins with the prenyltransferase claS that transfers geranyl pyrophosphate (GPP) to hydroquinone to produces geranylhydroquinon. The cytochrome P450 monooxygenase claR then catalyzes the diradical coupling reaction between the intramolecular hydroquinone and allyl moieties to form the benzo-fused ten-membered carbocyclic ring unit of wigantol. Finally the cytochrome P450 monooxygenase claT exquisitely and stereoselectively assembles the alpha,beta-epoxy-gamma-lactone moiety, producing clavilactone A via arnebinol A. This Ampulloclitocybe clavipes (Club foot) protein is Clavilactone A biosynthesis cluster protein Y.